The following is a 371-amino-acid chain: Cytochrome b (371 aa).

A run of 4 helical transmembrane segments spans residues 25–45 (FGSMLLTCSALQVMTGFFLAI), 69–90 (WIMQNLHAIGASMFFICIYIHI), 105–125 (WLSGTTLLIILMATAFFGYVL), and 170–190 (FFALHFILPFAIISMSSIHIM). Heme b is bound by residues H75 and H89. Positions 174 and 188 each coordinate heme b. Residue H193 coordinates a ubiquinone. 4 helical membrane-spanning segments follow: residues 218–238 (HKDILMLTIMITTMFTIMSFS), 280–300 (LGGTVALVLSVAILMTMPFTH), 312–332 (IMQLVFWTLIATFITITWAAT), and 339–358 (FTIIGQTTSFLYFSFFIMNP).

The protein belongs to the cytochrome b family. As to quaternary structure, the cytochrome bc1 complex contains 3 respiratory subunits (MT-CYB, CYC1 and UQCRFS1), 2 core proteins (UQCRC1 and UQCRC2) and probably 6 low-molecular weight proteins. Heme b is required as a cofactor.

The protein localises to the mitochondrion inner membrane. Its function is as follows. Component of the ubiquinol-cytochrome c reductase complex (complex III or cytochrome b-c1 complex) that is part of the mitochondrial respiratory chain. The b-c1 complex mediates electron transfer from ubiquinol to cytochrome c. Contributes to the generation of a proton gradient across the mitochondrial membrane that is then used for ATP synthesis. This Coluber constrictor (Eastern racer) protein is Cytochrome b (MT-CYB).